The sequence spans 955 residues: Valine--tRNA ligase (955 aa).

A 'HIGH' region motif is present at residues proline 41 to histidine 51. The short motif at lysine 554–serine 558 is the 'KMSKS' region element. Position 557 (lysine 557) interacts with ATP. Residues glutamine 926–lysine 946 adopt a coiled-coil conformation.

This sequence belongs to the class-I aminoacyl-tRNA synthetase family. ValS type 1 subfamily. Monomer.

Its subcellular location is the cytoplasm. The enzyme catalyses tRNA(Val) + L-valine + ATP = L-valyl-tRNA(Val) + AMP + diphosphate. Catalyzes the attachment of valine to tRNA(Val). As ValRS can inadvertently accommodate and process structurally similar amino acids such as threonine, to avoid such errors, it has a 'posttransfer' editing activity that hydrolyzes mischarged Thr-tRNA(Val) in a tRNA-dependent manner. This chain is Valine--tRNA ligase, found in Buchnera aphidicola subsp. Acyrthosiphon pisum (strain APS) (Acyrthosiphon pisum symbiotic bacterium).